The following is a 123-amino-acid chain: RxLR effector protein Avh262 (123 aa).

The first 18 residues, 1 to 18, serve as a signal peptide directing secretion; the sequence is MLPVAVVLVVFAVAVTSA. A disordered region spans residues 24–46; the sequence is VNPLPRRRRLKGTEEKGHHTNVN. The RxLR-dEER motif lies at 30 to 50; it reads RRRLKGTEEKGHHTNVNDEER. The span at 34–46 shows a compositional bias: basic and acidic residues; that stretch reads KGTEEKGHHTNVN. Residues 60 to 82 are biP-binding; sequence LISKLKVKINAKLLAGDSAKPAT.

Belongs to the RxLR effector family. In terms of assembly, interacts with host plant ER-luminal binding immunoglobulin proteins (BiPs) such as soybean BiP1, BiP2, BiP3 and BiP4.

It is found in the secreted. The protein resides in the host endoplasmic reticulum. Effector that suppresses plant defense responses during the early stages of pathogen infection. Suppresses cell death induced by effectors and PAMPs in plant hosts. Avh262 stabilizes endoplasmic reticulum (ER)-luminal binding immunoglobulin proteins (BiPs), which act as negative regulators of plant resistance to Phytophthora. By stabilizing BiPs, Avh262 suppresses ER stress-triggered cell death and facilitates Phytophthora infection. The sequence is that of RxLR effector protein Avh262 from Phytophthora sojae (Soybean stem and root rot agent).